We begin with the raw amino-acid sequence, 219 residues long: Proteasome subunit beta (219 aa).

Residues 1–14 constitute a propeptide, removed in mature form; by autocatalysis; the sequence is MISNSEYHKEYMKG. T15 functions as the Nucleophile in the catalytic mechanism.

Belongs to the peptidase T1B family. In terms of assembly, the 20S proteasome core is composed of 14 alpha and 14 beta subunits that assemble into four stacked heptameric rings, resulting in a barrel-shaped structure. The two inner rings, each composed of seven catalytic beta subunits, are sandwiched by two outer rings, each composed of seven alpha subunits. The catalytic chamber with the active sites is on the inside of the barrel. Has a gated structure, the ends of the cylinder being occluded by the N-termini of the alpha-subunits. Is capped at one or both ends by the proteasome regulatory ATPase, PAN.

It is found in the cytoplasm. It carries out the reaction Cleavage of peptide bonds with very broad specificity.. Its activity is regulated as follows. The formation of the proteasomal ATPase PAN-20S proteasome complex, via the docking of the C-termini of PAN into the intersubunit pockets in the alpha-rings, triggers opening of the gate for substrate entry. Interconversion between the open-gate and close-gate conformations leads to a dynamic regulation of the 20S proteasome proteolysis activity. In terms of biological role, component of the proteasome core, a large protease complex with broad specificity involved in protein degradation. The protein is Proteasome subunit beta of Methanococcus maripaludis (strain C5 / ATCC BAA-1333).